Consider the following 66-residue polypeptide: UPF0370 protein YpfN (66 aa).

A helical membrane pass occupies residues L4–I24. Residues K39–K66 are disordered. A compositionally biased stretch (basic and acidic residues) spans L42–K51.

This sequence belongs to the UPF0370 family.

It localises to the cell membrane. The polypeptide is UPF0370 protein YpfN (Salmonella arizonae (strain ATCC BAA-731 / CDC346-86 / RSK2980)).